The following is a 563-amino-acid chain: Probable Xaa-Pro aminopeptidase PEPP (563 aa).

The Mn(2+) site is built by D331, D342, E491, and E532.

The protein belongs to the peptidase M24B family. The cofactor is Mn(2+).

It carries out the reaction Release of any N-terminal amino acid, including proline, that is linked to proline, even from a dipeptide or tripeptide.. Catalyzes the removal of a penultimate prolyl residue from the N-termini of peptides. This chain is Probable Xaa-Pro aminopeptidase PEPP (PEPP), found in Verticillium alfalfae (strain VaMs.102 / ATCC MYA-4576 / FGSC 10136) (Verticillium wilt of alfalfa).